The sequence spans 98 residues: Putative septation protein SpoVG (98 aa).

Belongs to the SpoVG family.

Essential for sporulation. Interferes with or is a negative regulator of the pathway leading to asymmetric septation. In Bacillus pumilus (strain SAFR-032), this protein is Putative septation protein SpoVG.